Consider the following 183-residue polypeptide: Hypoxanthine-guanine phosphoribosyltransferase (183 aa).

The diphosphate site is built by Arg47 and Gly48. Residues Glu103 and Asp104 each coordinate Mg(2+). The active-site Proton acceptor is the Asp107. Residues Lys134, 155-156, and Asp162 each bind GMP; that span reads FV. Position 168 (Arg168) interacts with diphosphate.

Belongs to the purine/pyrimidine phosphoribosyltransferase family. The cofactor is Mg(2+).

Its subcellular location is the cytoplasm. It catalyses the reaction IMP + diphosphate = hypoxanthine + 5-phospho-alpha-D-ribose 1-diphosphate. It carries out the reaction GMP + diphosphate = guanine + 5-phospho-alpha-D-ribose 1-diphosphate. It functions in the pathway purine metabolism; IMP biosynthesis via salvage pathway; IMP from hypoxanthine: step 1/1. The protein operates within purine metabolism; GMP biosynthesis via salvage pathway; GMP from guanine: step 1/1. Its function is as follows. Purine salvage pathway enzyme that catalyzes the transfer of the ribosyl-5-phosphate group from 5-phospho-alpha-D-ribose 1-diphosphate (PRPP) to the N9 position of the 6-oxopurines hypoxanthine and guanine to form the corresponding ribonucleotides IMP (inosine 5'-monophosphate) and GMP (guanosine 5'-monophosphate), with the release of PPi. This Lactococcus lactis subsp. lactis (strain IL1403) (Streptococcus lactis) protein is Hypoxanthine-guanine phosphoribosyltransferase (hpt).